A 113-amino-acid polypeptide reads, in one-letter code: Putative pterin-4-alpha-carbinolamine dehydratase (113 aa).

The protein belongs to the pterin-4-alpha-carbinolamine dehydratase family.

The catalysed reaction is (4aS,6R)-4a-hydroxy-L-erythro-5,6,7,8-tetrahydrobiopterin = (6R)-L-erythro-6,7-dihydrobiopterin + H2O. This chain is Putative pterin-4-alpha-carbinolamine dehydratase, found in Bordetella bronchiseptica (strain ATCC BAA-588 / NCTC 13252 / RB50) (Alcaligenes bronchisepticus).